A 360-amino-acid polypeptide reads, in one-letter code: ELAV-like protein 2 (360 aa).

The interval 1–36 is disordered; it reads METQLSNGPTCNNTANGPTTVNNNCSSPVDSGNTED. RRM domains are found at residues 39-117 and 125-205; these read TNLI…YARP and ANLY…FANN. At serine 221 the chain carries Phosphoserine. The region spanning 277-355 is the RRM 3 domain; the sequence is WCIFVYNLAP…RVLQVSFKTN (79 aa).

This sequence belongs to the RRM elav family. Interacts with IGF2BP1. Interacts with MAP1B light chain LC1. As to expression, brain; neural-specific. Expressed in the hippocampus.

Its function is as follows. RNA-binding protein that binds to the 3' untranslated region (3'UTR) of target mRNAs. Seems to recognize a GAAA motif. Can bind to its own 3'UTR, the FOS 3'UTR and the ID 3'UTR. In Mus musculus (Mouse), this protein is ELAV-like protein 2 (Elavl2).